The chain runs to 406 residues: Lymphocyte transmembrane adapter 1 (406 aa).

The disordered stretch occupies residues 1–25; the sequence is MYTTPAPPEITRRSSEPSTQQGTLG. The Extracellular segment spans residues 1 to 33; that stretch reads MYTTPAPPEITRRSSEPSTQQGTLGSLEGEKGH. Residues 34 to 54 form a helical; Signal-anchor for type III membrane protein membrane-spanning segment; sequence LLFPGFVVLVTIFLVVIVTCI. Residues 55–406 are Cytoplasmic-facing; that stretch reads LWSRKKQKKR…LATETSGEEV (352 aa). Positions 109–131 are disordered; sequence ESLLSRASDSPEPEVPQASGSLQ. A Phosphotyrosine modification is found at Tyr-184. The disordered stretch occupies residues 219-258; that stretch reads AEGGHAGCGKATDRTGVWAPGLQGSNSLSEGDDSSQSSND. Over residues 242–258 the composition is skewed to low complexity; that stretch reads GSNSLSEGDDSSQSSND. A phosphotyrosine mark is found at Tyr-259, Tyr-285, and Tyr-352. The tract at residues 358 to 406 is disordered; sequence PELEGKDWKQGPGTWHPSDERTPSDQAGKFCEAVYPAGSLATETSGEEV.

When phosphorylated, interacts with GRB2, PIK3R1 and GRAP2. Post-translationally, phosphorylated on tyrosines upon TCR or BCR activation; which leads to the recruitment of GRB2, PIK3R1 and GRAP2.

Its subcellular location is the cell membrane. Its function is as follows. Negatively regulates TCR (T-cell antigen receptor)-mediated signaling in T-cells and BCR (B-cell antigen receptor)-mediated signaling in B-cells. In Rattus norvegicus (Rat), this protein is Lymphocyte transmembrane adapter 1 (Lax1).